A 521-amino-acid polypeptide reads, in one-letter code: Probable ATP-dependent RNA helicase Dbp45A (521 aa).

The Q motif signature appears at 7-35 (NPFQILGLRPWLVKQLTKLGLKGATPIQQ). The region spanning 38–209 (IPAILAGQDC…IFPIASDCFE (172 aa)) is the Helicase ATP-binding domain. 51–58 (AKTGSGKT) provides a ligand contact to ATP. Positions 157 to 160 (DEAD) match the DEAD box motif. A Helicase C-terminal domain is found at 237–386 (VLIEALRKYR…EHPIDQRMVE (150 aa)). The segment at 448 to 521 (KRKLQHAEPA…GRADVKKDKA (74 aa)) is disordered. Composition is skewed to basic and acidic residues over residues 460–482 (EEGK…FEKK) and 502–521 (LNKE…KDKA).

This sequence belongs to the DEAD box helicase family. DDX49/DBP8 subfamily.

It carries out the reaction ATP + H2O = ADP + phosphate + H(+). In terms of biological role, probable ATP-binding RNA helicase. This is Probable ATP-dependent RNA helicase Dbp45A (Dbp45A) from Drosophila melanogaster (Fruit fly).